A 169-amino-acid polypeptide reads, in one-letter code: UPF0251 protein MM_2090 (169 aa).

Belongs to the UPF0251 family.

This is UPF0251 protein MM_2090 from Methanosarcina mazei (strain ATCC BAA-159 / DSM 3647 / Goe1 / Go1 / JCM 11833 / OCM 88) (Methanosarcina frisia).